Here is a 226-residue protein sequence, read N- to C-terminus: Ribonuclease 3 (226 aa).

The 123-residue stretch at 6 to 128 (IQKLQKILGY…LIGSIFLDSN (123 aa)) folds into the RNase III domain. Glutamate 41 is a Mg(2+) binding site. The active site involves aspartate 45. Mg(2+) contacts are provided by asparagine 114 and glutamate 117. Glutamate 117 is a catalytic residue. The DRBM domain maps to 155 to 225 (DPKTRLQEYL…AQNALIKLGI (71 aa)).

This sequence belongs to the ribonuclease III family. In terms of assembly, homodimer. Requires Mg(2+) as cofactor.

The protein localises to the cytoplasm. It catalyses the reaction Endonucleolytic cleavage to 5'-phosphomonoester.. Digests double-stranded RNA. Involved in the processing of primary rRNA transcript to yield the immediate precursors to the large and small rRNAs (23S and 16S). Processes some mRNAs, and tRNAs when they are encoded in the rRNA operon. Processes pre-crRNA and tracrRNA of type II CRISPR loci if present in the organism. This Buchnera aphidicola subsp. Baizongia pistaciae (strain Bp) protein is Ribonuclease 3.